The chain runs to 2771 residues: Kinesin-like protein KIN-12D (2771 aa).

Composition is skewed to basic and acidic residues over residues 1–13 (MSKE…RDSD) and 40–54 (KNPK…DRTP). Disordered regions lie at residues 1–73 (MSKE…TPDK) and 117–139 (YSET…GSCY). Positions 118–131 (SETNSTQNTPTKSV) are enriched in polar residues. Residues 193-530 (NVQILIRVRP…LKFAQRAKLI (338 aa)) enclose the Kinesin motor domain. ATP is bound at residue 274-281 (GQTGSGKT). Microtubules-binding stretches follow at residues 400–404 (SSRSH), 431–437 (VDLAGSE), and 479–483 (HIPYR). 5 coiled-coil regions span residues 1033–1110 (AATA…NEME), 1267–1331 (ELKQ…MKEK), 1410–1505 (IILL…YVEN), 2108–2390 (ELED…EQVK), and 2512–2677 (RERD…LAQE). Basic residues predominate over residues 2727 to 2736 (LKGKAKSRRS). The segment at 2727–2771 (LKGKAKSRRSRNPERKMPSMPSPRRSWSQSPRSMSQVPFFSSLDR) is disordered. The span at 2744-2762 (PSMPSPRRSWSQSPRSMSQ) shows a compositional bias: low complexity.

The protein belongs to the TRAFAC class myosin-kinesin ATPase superfamily. Kinesin family. KIN-12 subfamily. As to expression, expressed in tissues enriched in dividing cells, such as root meristems, root primordia, and leaf primordia/young leaves.

Its subcellular location is the cytoplasm. The protein localises to the cytoskeleton. It localises to the phragmoplast. Functionally, involved in the spatial control of cytokinesis by a proper phragmoplast guidance. In Arabidopsis thaliana (Mouse-ear cress), this protein is Kinesin-like protein KIN-12D.